The following is a 209-amino-acid chain: RNA chaperone ProQ (209 aa).

Residues 101 to 155 are disordered; that stretch reads LAESKAKVQARRKEQAQKAREEGKAKAKPAANKKPQQPRRTNKPKVQKPTKPVET. The span at 111-125 shows a compositional bias: basic and acidic residues; that stretch reads RRKEQAQKAREEGKA. Over residues 136–148 the composition is skewed to basic residues; it reads QQPRRTNKPKVQK.

This sequence belongs to the ProQ family.

It localises to the cytoplasm. Functionally, RNA chaperone with significant RNA binding, RNA strand exchange and RNA duplexing activities. The sequence is that of RNA chaperone ProQ from Vibrio parahaemolyticus serotype O3:K6 (strain RIMD 2210633).